Consider the following 336-residue polypeptide: Mitochondrial fission regulator 2 (336 aa).

Residues 139–166 (QPDALLKISALEEELQRLRAQIATIITA) adopt a coiled-coil conformation. Residues 296–336 (HRQRDDSFGKENHSAEPSPFSSPDTPRIFQHTRRSQGRIHL) are disordered. The span at 297 to 309 (RQRDDSFGKENHS) shows a compositional bias: basic and acidic residues. Basic residues predominate over residues 325–336 (QHTRRSQGRIHL).

Belongs to the MTFR1 family.

It localises to the mitochondrion. Functionally, may play a role in mitochondrial aerobic respiration. Can also promote mitochondrial fission. The chain is Mitochondrial fission regulator 2 (mtfr2) from Danio rerio (Zebrafish).